A 155-amino-acid chain; its full sequence is Ribonuclease H (155 aa).

The RNase H type-1 domain occupies 1-142 (MLKQVEIFTD…CDELARAAAS (142 aa)). 4 residues coordinate Mg(2+): Asp-10, Glu-48, Asp-70, and Asp-134.

The protein belongs to the RNase H family. As to quaternary structure, monomer. Requires Mg(2+) as cofactor.

It is found in the cytoplasm. It catalyses the reaction Endonucleolytic cleavage to 5'-phosphomonoester.. In terms of biological role, endonuclease that specifically degrades the RNA of RNA-DNA hybrids. The protein is Ribonuclease H of Klebsiella pneumoniae subsp. pneumoniae (strain ATCC 700721 / MGH 78578).